The sequence spans 353 residues: MKYYLQKLIDGHDLSMVESEAAMGQILESATDAQVGAFVMGMKMKGETSDEVAGFAKGMLNVANMIRPKVDGILVDTCGTGGDRHNTINISTAAAIVAAAAGVTVAKHGNHSFTSLSGSADVFKELGVKIDLEPDLVKSSIEDIGIGFMLAPKFHPAMKRMVGPRKELAVRTMFNILGPLTNPTGAKAQVIGVFDKDLCNLMAEVLKKLGKEHVMVFHGDGMDEISTLSETFVAELKDGIISNYTLTPEELGVARAKATDIVGGTPEENAHDLLYILNGEKGAKRDIVVVNAAAAIYVAGLAISIKDAIPLAEEAIDSRKALNKLKELVEFTSGNKVDNEAFNTGQSLRNEVC.

5-phospho-alpha-D-ribose 1-diphosphate is bound by residues G79, G82–D83, T87, N89–T92, K107–S115, and S119. Residue G79 coordinates anthranilate. S91 serves as a coordination point for Mg(2+). Residue N110 coordinates anthranilate. R165 is an anthranilate binding site. D223 and E224 together coordinate Mg(2+).

Belongs to the anthranilate phosphoribosyltransferase family. As to quaternary structure, homodimer. Mg(2+) is required as a cofactor.

It catalyses the reaction N-(5-phospho-beta-D-ribosyl)anthranilate + diphosphate = 5-phospho-alpha-D-ribose 1-diphosphate + anthranilate. It participates in amino-acid biosynthesis; L-tryptophan biosynthesis; L-tryptophan from chorismate: step 2/5. Catalyzes the transfer of the phosphoribosyl group of 5-phosphorylribose-1-pyrophosphate (PRPP) to anthranilate to yield N-(5'-phosphoribosyl)-anthranilate (PRA). This Methanococcoides burtonii (strain DSM 6242 / NBRC 107633 / OCM 468 / ACE-M) protein is Anthranilate phosphoribosyltransferase.